Consider the following 300-residue polypeptide: N-acetylmannosamine kinase (300 aa).

ATP-binding positions include Ala5–Lys12 and Gly132–Leu139. His156, Cys166, Cys168, and Cys173 together coordinate Zn(2+).

It belongs to the ROK (NagC/XylR) family. NanK subfamily. As to quaternary structure, homodimer.

The catalysed reaction is an N-acyl-D-mannosamine + ATP = an N-acyl-D-mannosamine 6-phosphate + ADP + H(+). Its pathway is amino-sugar metabolism; N-acetylneuraminate degradation; D-fructose 6-phosphate from N-acetylneuraminate: step 2/5. Functionally, catalyzes the phosphorylation of N-acetylmannosamine (ManNAc) to ManNAc-6-P. The polypeptide is N-acetylmannosamine kinase (Haemophilus influenzae (strain PittGG)).